The following is a 359-amino-acid chain: Heat-inducible transcription repressor HrcA (359 aa).

This sequence belongs to the HrcA family.

In terms of biological role, negative regulator of class I heat shock genes (grpE-dnaK-dnaJ and groELS operons). Prevents heat-shock induction of these operons. In Rhizobium meliloti (strain 1021) (Ensifer meliloti), this protein is Heat-inducible transcription repressor HrcA.